We begin with the raw amino-acid sequence, 153 residues long: Putative type II secretion system protein M (153 aa).

The Cytoplasmic portion of the chain corresponds to 1 to 16; it reads MIKSWWAEKSTSEKQI. Residues 17-37 form a helical membrane-spanning segment; it reads VAALAVLSLGVFCWLGVIKPI. The Periplasmic segment spans residues 38–153; it reads DTYIAEHQSH…LRHLSFREQQ (116 aa).

The protein belongs to the GSP M family. Type II secretion system is composed of four main components: the outer membrane complex, the inner membrane complex, the cytoplasmic secretion ATPase and the periplasm-spanning pseudopilus. Forms homodimers. Interacts with GspL. Interacts with GspE and GspF.

It is found in the cell inner membrane. Its function is as follows. Inner membrane component of the type II secretion system required for the energy-dependent secretion of extracellular factors such as proteases and toxins from the periplasm. Plays a role in the complex assembly and recruits GspL resulting in a stable complex in the inner membrane. Provides thus a link between the energy-providing GspE protein in the cytoplasm and the rest of the T2SS machinery. This is Putative type II secretion system protein M (gspM) from Escherichia coli (strain K12).